The chain runs to 463 residues: Nuclear hormone receptor family member nhr-79 (463 aa).

A DNA-binding region (nuclear receptor) is located at residues 3-81 (RGKCMVCDSP…AGMMRDLVQA (79 aa)). NR C4-type zinc fingers lie at residues 6–27 (CMVC…CKAC) and 43–64 (CLGD…CRHC). Positions 83-119 (REIKSDKGKNSRNSSQSEDFFSPPPEQPGPSNYFDQF) are disordered. The NR LBD domain maps to 203-463 (YTEQVINLNM…ILKDMLKFQY (261 aa)).

Belongs to the nuclear hormone receptor family.

It localises to the nucleus. Functionally, orphan nuclear receptor. The polypeptide is Nuclear hormone receptor family member nhr-79 (nhr-79) (Caenorhabditis elegans).